Here is a 548-residue protein sequence, read N- to C-terminus: Chaperonin GroEL (548 aa).

Residues threonine 30 to proline 33, lysine 51, aspartate 87 to threonine 91, glycine 415, asparagine 479 to alanine 481, and aspartate 495 contribute to the ATP site. The segment at leucine 524–methionine 548 is disordered. The span at glycine 539 to methionine 548 shows a compositional bias: gly residues.

It belongs to the chaperonin (HSP60) family. As to quaternary structure, forms a cylinder of 14 subunits composed of two heptameric rings stacked back-to-back. Interacts with the co-chaperonin GroES.

It is found in the cytoplasm. It catalyses the reaction ATP + H2O + a folded polypeptide = ADP + phosphate + an unfolded polypeptide.. In terms of biological role, together with its co-chaperonin GroES, plays an essential role in assisting protein folding. The GroEL-GroES system forms a nano-cage that allows encapsulation of the non-native substrate proteins and provides a physical environment optimized to promote and accelerate protein folding. This chain is Chaperonin GroEL, found in Buchnera aphidicola subsp. Myzus persicae (Myzus persicae primary endosymbiont).